We begin with the raw amino-acid sequence, 154 residues long: Aspartate carbamoyltransferase regulatory chain (154 aa).

Zn(2+) is bound by residues Cys-109, Cys-114, Cys-138, and Cys-141.

The protein belongs to the PyrI family. As to quaternary structure, contains catalytic and regulatory chains. Requires Zn(2+) as cofactor.

In terms of biological role, involved in allosteric regulation of aspartate carbamoyltransferase. This Yersinia pseudotuberculosis serotype O:1b (strain IP 31758) protein is Aspartate carbamoyltransferase regulatory chain.